A 103-amino-acid polypeptide reads, in one-letter code: MVNIPKARKTHCVKCNKHTPHKVTQYKAGKPSLFAQGKRRYDRKQSGFGGQTKPVFHKKAKTTKKIVLRMECSCGYKKQQVLKRCKRFELGGEKKSKNEAIKM.

The tract at residues 37 to 56 (GKRRYDRKQSGFGGQTKPVF) is disordered.

The protein belongs to the eukaryotic ribosomal protein eL42 family.

The protein is Large ribosomal subunit protein eL42 (rpl36a) of Dictyostelium discoideum (Social amoeba).